The chain runs to 55 residues: Large ribosomal subunit protein bL33 (55 aa).

A compositionally biased stretch (basic and acidic residues) spans 1 to 11; that stretch reads MAKSGRDKIKL. The tract at residues 1 to 28 is disordered; that stretch reads MAKSGRDKIKLESTAGTGHFYTTTKNKR. A compositionally biased stretch (polar residues) spans 14–24; it reads TAGTGHFYTTT.

It belongs to the bacterial ribosomal protein bL33 family.

The sequence is that of Large ribosomal subunit protein bL33 from Janthinobacterium sp. (strain Marseille) (Minibacterium massiliensis).